A 40-amino-acid polypeptide reads, in one-letter code: MADTTGRIPLWIIGTGAGILVIGLIGIFFYGSYSGLGSSL.

A helical transmembrane segment spans residues 8–28 (IPLWIIGTGAGILVIGLIGIF).

Belongs to the PsbJ family. PSII is composed of 1 copy each of membrane proteins PsbA, PsbB, PsbC, PsbD, PsbE, PsbF, PsbH, PsbI, PsbJ, PsbK, PsbL, PsbM, PsbT, PsbX, PsbY, PsbZ, Psb30/Ycf12, at least 3 peripheral proteins of the oxygen-evolving complex and a large number of cofactors. It forms dimeric complexes.

The protein resides in the plastid. It is found in the chloroplast thylakoid membrane. In terms of biological role, one of the components of the core complex of photosystem II (PSII). PSII is a light-driven water:plastoquinone oxidoreductase that uses light energy to abstract electrons from H(2)O, generating O(2) and a proton gradient subsequently used for ATP formation. It consists of a core antenna complex that captures photons, and an electron transfer chain that converts photonic excitation into a charge separation. The polypeptide is Photosystem II reaction center protein J (Aethionema grandiflorum (Persian stone-cress)).